Reading from the N-terminus, the 437-residue chain is Ribosomal protein uS12 methylthiotransferase RimO (437 aa).

The MTTase N-terminal domain maps to 4-114 (PRVSFVSLGC…VMSAVHEAVP (111 aa)). 6 residues coordinate [4Fe-4S] cluster: Cys-13, Cys-49, Cys-78, Cys-145, Cys-149, and Cys-152. One can recognise a Radical SAM core domain in the interval 131–369 (LTPRHYAYLK…MAKQQQISTN (239 aa)). In terms of domain architecture, TRAM spans 372–437 (KKKVGKRLPV…DAYDLHGIAV (66 aa)).

Belongs to the methylthiotransferase family. RimO subfamily. Requires [4Fe-4S] cluster as cofactor.

It is found in the cytoplasm. It carries out the reaction L-aspartate(89)-[ribosomal protein uS12]-hydrogen + (sulfur carrier)-SH + AH2 + 2 S-adenosyl-L-methionine = 3-methylsulfanyl-L-aspartate(89)-[ribosomal protein uS12]-hydrogen + (sulfur carrier)-H + 5'-deoxyadenosine + L-methionine + A + S-adenosyl-L-homocysteine + 2 H(+). Functionally, catalyzes the methylthiolation of an aspartic acid residue of ribosomal protein uS12. This Brucella anthropi (strain ATCC 49188 / DSM 6882 / CCUG 24695 / JCM 21032 / LMG 3331 / NBRC 15819 / NCTC 12168 / Alc 37) (Ochrobactrum anthropi) protein is Ribosomal protein uS12 methylthiotransferase RimO.